The sequence spans 148 residues: Lipoprotein MlpA (148 aa).

The N-terminal stretch at 1-17 (MKIINILFCLFLLLLNS) is a signal peptide. A lipid anchor (N-palmitoyl cysteine) is attached at Cys18. Cys18 is lipidated: S-diacylglycerol cysteine. Residues 26–58 (LKNNAQQTKSRGKRDLTQKEATPEKPKSKEELL) form a disordered region. The span at 38–58 (KRDLTQKEATPEKPKSKEELL) shows a compositional bias: basic and acidic residues.

It belongs to the Multicopy lipoprotein (Mlp) family.

The protein resides in the cell outer membrane. Its function is as follows. An outer membrane protein that may participate in pathogenesis. Some human Lyme disease patients have antibodies against this protein. The Mlp proteins probably undergo intragenic recombination, generating new alleles. In Borreliella burgdorferi (strain ATCC 35210 / DSM 4680 / CIP 102532 / B31) (Borrelia burgdorferi), this protein is Lipoprotein MlpA (mlpA).